Reading from the N-terminus, the 277-residue chain is Large ribosomal subunit protein uL2c (277 aa).

The segment at 228 to 254 (VDHPHGGGEGRCPVGHAQPRTPWGKPA) is disordered.

This sequence belongs to the universal ribosomal protein uL2 family. In terms of assembly, part of the 50S ribosomal subunit.

It localises to the plastid. It is found in the chloroplast. The chain is Large ribosomal subunit protein uL2c (rpl2) from Ostreococcus tauri.